The chain runs to 138 residues: Small ribosomal subunit protein uS12 (138 aa).

The segment at 33–55 (KEHTNVSSPQKRGVCTRVGTMTP) is disordered.

It belongs to the universal ribosomal protein uS12 family. In terms of assembly, part of the 30S ribosomal subunit. Contacts proteins S8 and S17. May interact with IF1 in the 30S initiation complex. Interacts with BrxC.

Functionally, with S4 and S5 plays an important role in translational accuracy. In terms of biological role, interacts with and stabilizes bases of the 16S rRNA that are involved in tRNA selection in the A site and with the mRNA backbone. Located at the interface of the 30S and 50S subunits, it traverses the body of the 30S subunit contacting proteins on the other side and probably holding the rRNA structure together. The combined cluster of proteins S8, S12 and S17 appears to hold together the shoulder and platform of the 30S subunit. This chain is Small ribosomal subunit protein uS12 (rpsL), found in Bacillus subtilis (strain 168).